A 180-amino-acid chain; its full sequence is Der GTPase-activating protein YihI (180 aa).

Residues 1–10 (MKQPARTSQV) are compositionally biased toward polar residues. Disordered regions lie at residues 1–102 (MKQP…PRLT) and 158–180 (DAED…RTPE). Over residues 21-32 (TREEINQEARDR) the composition is skewed to basic and acidic residues. Polar residues predominate over residues 45–54 (SRANPATVSQ). Positions 55-67 (KGDKSQSVKDPRI) are enriched in basic and acidic residues. Positions 84-93 (PANPVKAAKP) are enriched in low complexity.

Belongs to the YihI family. Interacts with Der.

Functionally, a GTPase-activating protein (GAP) that modifies Der/EngA GTPase function. May play a role in ribosome biogenesis. This is Der GTPase-activating protein YihI from Erwinia tasmaniensis (strain DSM 17950 / CFBP 7177 / CIP 109463 / NCPPB 4357 / Et1/99).